A 116-amino-acid chain; its full sequence is Putative pterin-4-alpha-carbinolamine dehydratase 1 (116 aa).

The protein belongs to the pterin-4-alpha-carbinolamine dehydratase family.

The catalysed reaction is (4aS,6R)-4a-hydroxy-L-erythro-5,6,7,8-tetrahydrobiopterin = (6R)-L-erythro-6,7-dihydrobiopterin + H2O. The chain is Putative pterin-4-alpha-carbinolamine dehydratase 1 from Cupriavidus pinatubonensis (strain JMP 134 / LMG 1197) (Cupriavidus necator (strain JMP 134)).